The primary structure comprises 225 residues: Ribonuclease T (225 aa).

The segment at 1-21 (MSEDHFDEEHEGHGGGGGSRH) is disordered. One can recognise an Exonuclease domain in the interval 33 to 207 (VVVDVETGGF…YDTEKTAELF (175 aa)). Asp-36, Glu-38, His-194, and Asp-199 together coordinate Mg(2+). Residue His-194 is the Proton donor/acceptor of the active site.

This sequence belongs to the RNase T family. In terms of assembly, homodimer. Requires Mg(2+) as cofactor.

In terms of biological role, trims short 3' overhangs of a variety of RNA species, leaving a one or two nucleotide 3' overhang. Responsible for the end-turnover of tRNA: specifically removes the terminal AMP residue from uncharged tRNA (tRNA-C-C-A). Also appears to be involved in tRNA biosynthesis. In Pseudomonas syringae pv. tomato (strain ATCC BAA-871 / DC3000), this protein is Ribonuclease T.